The following is a 242-amino-acid chain: ATP synthase subunit a (242 aa).

Helical transmembrane passes span 29 to 49 (SSIYMLLASILALTYFYLAFY), 84 to 104 (FIPLVFSLFIFILFCNLLGMT), 114 to 134 (IIVTFTLAILVFLTVTIVGFV), 140 to 160 (FLTLFLPHGTPLWLAPLMIVI), 189 to 209 (VIAGFTVSLMIYLKFLPIPLM), and 210 to 230 (VILIGFEIFVAILQAYIFTIL).

It belongs to the ATPase A chain family. In terms of assembly, F-type ATPases have 2 components, CF(1) - the catalytic core - and CF(0) - the membrane proton channel. CF(1) has five subunits: alpha(3), beta(3), gamma(1), delta(1), epsilon(1). CF(0) has three main subunits: a(1), b(2) and c(9-12). The alpha and beta chains form an alternating ring which encloses part of the gamma chain. CF(1) is attached to CF(0) by a central stalk formed by the gamma and epsilon chains, while a peripheral stalk is formed by the delta and b chains.

It localises to the cell inner membrane. Its function is as follows. Key component of the proton channel; it plays a direct role in the translocation of protons across the membrane. In Rickettsia felis (strain ATCC VR-1525 / URRWXCal2) (Rickettsia azadi), this protein is ATP synthase subunit a.